Reading from the N-terminus, the 234-residue chain is Lipoprotein-releasing system ATP-binding protein LolD (234 aa).

In terms of domain architecture, ABC transporter spans 7–234 (LLCNNLCKKY…QDELTVTGAL (228 aa)). Position 43–50 (43–50 (GSSGSGKS)) interacts with ATP.

Belongs to the ABC transporter superfamily. Lipoprotein translocase (TC 3.A.1.125) family. The complex is composed of two ATP-binding proteins (LolD) and two transmembrane proteins (LolC and LolE).

The protein resides in the cell inner membrane. Its function is as follows. Part of the ABC transporter complex LolCDE involved in the translocation of mature outer membrane-directed lipoproteins, from the inner membrane to the periplasmic chaperone, LolA. Responsible for the formation of the LolA-lipoprotein complex in an ATP-dependent manner. The sequence is that of Lipoprotein-releasing system ATP-binding protein LolD from Photorhabdus laumondii subsp. laumondii (strain DSM 15139 / CIP 105565 / TT01) (Photorhabdus luminescens subsp. laumondii).